The primary structure comprises 337 residues: Heme A synthase (337 aa).

The next 5 membrane-spanning stretches (helical) occupy residues 6-26 (ITKWLCISCIMVIATLVIGGI), 87-107 (FIHRLLGRITALIYIVPLIYF), 119-139 (LPYIIALLLFCVQGFIGWYMV), 154-174 (LAFHLIIAVIIYHILFYQLIK), and 192-212 (LIFSGIAITVVYVQIFLGALV). His-256 is a heme binding site. The next 3 helical transmembrane spans lie at 258-278 (LVGYSVFLVVVVLISCLLKIE), 285-305 (IAYFLMIALFMQVSTGILTLL), and 308-328 (VPIIIASIHQLFAIILLSIII). His-316 serves as a coordination point for heme.

The protein belongs to the COX15/CtaA family. Type 2 subfamily. As to quaternary structure, interacts with CtaB. The cofactor is heme b.

The protein localises to the cell membrane. It catalyses the reaction Fe(II)-heme o + 2 A + H2O = Fe(II)-heme a + 2 AH2. The protein operates within porphyrin-containing compound metabolism; heme A biosynthesis; heme A from heme O: step 1/1. Functionally, catalyzes the conversion of heme O to heme A by two successive hydroxylations of the methyl group at C8. The first hydroxylation forms heme I, the second hydroxylation results in an unstable dihydroxymethyl group, which spontaneously dehydrates, resulting in the formyl group of heme A. The sequence is that of Heme A synthase from Rickettsia conorii (strain ATCC VR-613 / Malish 7).